A 135-amino-acid polypeptide reads, in one-letter code: Class I hydrophobin 15 (135 aa).

Positions 1–21 (MFAKSATIAIVLAALAGFSAA) are cleaved as a signal peptide. Cystine bridges form between C50–C113, C57–C107, C58–C97, and C114–C127. N131 carries N-linked (GlcNAc...) asparagine glycosylation.

Belongs to the fungal hydrophobin family. As to quaternary structure, self-assembles to form functional amyloid fibrils called rodlets. Self-assembly into fibrillar rodlets occurs spontaneously at hydrophobic:hydrophilic interfaces and the rodlets further associate laterally to form amphipathic monolayers.

It localises to the secreted. Its subcellular location is the cell wall. Aerial growth, conidiation, and dispersal of filamentous fungi in the environment rely upon a capability of their secreting small amphipathic proteins called hydrophobins (HPBs) with low sequence identity. Class I can self-assemble into an outermost layer of rodlet bundles on aerial cell surfaces, conferring cellular hydrophobicity that supports fungal growth, development and dispersal; whereas Class II form highly ordered films at water-air interfaces through intermolecular interactions but contribute nothing to the rodlet structure. This Pleurotus ostreatus (strain PC15) (Oyster mushroom) protein is Class I hydrophobin 15.